The chain runs to 224 residues: Large ribosomal subunit protein uL3 (224 aa).

Glutamine 159 is modified (N5-methylglutamine).

Belongs to the universal ribosomal protein uL3 family. Part of the 50S ribosomal subunit. Forms a cluster with proteins L14 and L19. Methylated by PrmB.

Functionally, one of the primary rRNA binding proteins, it binds directly near the 3'-end of the 23S rRNA, where it nucleates assembly of the 50S subunit. This Herminiimonas arsenicoxydans protein is Large ribosomal subunit protein uL3.